The sequence spans 367 residues: MTISAQCNLQKLAFATTLAVTIVLSQGRAIGQVKHGSPIELAKADVSTAVRQDMANEVRIVGSLTPIRRSTLTSRVSSTIIELPVQIGDVVNAGDLLVRFERGALESAVTGRKAEADALSAQTELAEAVLERNTRLGERGAASEATRLAALADVLDLRAQLRSKQAEVSDAERSLSHAEVRAEFGGVIAARSVEEGQTVPLNTQLMTIVELNRLEVDAGVPTSRIPLIRLKQSVELTVEGFPGRTFSGEVARISPTADAGSRAVRVFIAVDNEEGLLRGGMFTIGDLRVDDQKDVIALPAASIRHDADGFFVLKVEAGVLQRRPVGLGRSWSDRDLVQVSGVSEGDVIVTAPLPDLVVNTPVIIEGI.

It belongs to the membrane fusion protein (MFP) (TC 8.A.1) family.

Involved in the production of Medicago-specific nodulation signal molecule. The sequence is that of Nodulation protein NolF (nolF) from Rhizobium meliloti (strain 1021) (Ensifer meliloti).